Consider the following 240-residue polypeptide: Phosphoenolpyruvate guanylyltransferase (240 aa).

Phosphoenolpyruvate-binding residues include T161, G178, and S181.

This sequence belongs to the CofC family.

It catalyses the reaction phosphoenolpyruvate + GTP + H(+) = enolpyruvoyl-2-diphospho-5'-guanosine + diphosphate. Its pathway is cofactor biosynthesis; coenzyme F420 biosynthesis. Functionally, guanylyltransferase that catalyzes the activation of phosphoenolpyruvate (PEP) as enolpyruvoyl-2-diphospho-5'-guanosine, via the condensation of PEP with GTP. It is involved in the biosynthesis of coenzyme F420, a hydride carrier cofactor. The polypeptide is Phosphoenolpyruvate guanylyltransferase (Rhodococcus opacus (strain B4)).